A 97-amino-acid polypeptide reads, in one-letter code: Putative septation protein SpoVG (97 aa).

It belongs to the SpoVG family.

Its function is as follows. Essential for sporulation. Interferes with or is a negative regulator of the pathway leading to asymmetric septation. This is Putative septation protein SpoVG from Bacillus velezensis (strain DSM 23117 / BGSC 10A6 / LMG 26770 / FZB42) (Bacillus amyloliquefaciens subsp. plantarum).